A 370-amino-acid polypeptide reads, in one-letter code: uncharacterized protein (370 aa).

At M1 the chain carries N-acetylmethionine.

It belongs to the ornithine cyclodeaminase/mu-crystallin family.

This is an uncharacterized protein from Saccharomyces cerevisiae (strain ATCC 204508 / S288c) (Baker's yeast).